Consider the following 622-residue polypeptide: Apical membrane antigen 1 (622 aa).

Positions 1–24 (MRKLYCVLLLSAFEFTYMINFGRG) are cleaved as a signal peptide. At 25–546 (QNYWEHPYQN…EHKPTYDNMK (522 aa)) the chain is on the extracellular side. 5 disulfide bridges follow: Cys-149-Cys-302, Cys-217-Cys-247, Cys-263-Cys-275, Cys-320-Cys-418, and Cys-337-Cys-409. Asn-162 carries N-linked (GlcNAc...) asparagine glycosylation. N-linked (GlcNAc...) asparagine glycosylation is found at Asn-286, Asn-371, Asn-421, Asn-422, and Asn-499. Cystine bridges form between Cys-443–Cys-502, Cys-490–Cys-507, and Cys-492–Cys-509. The helical transmembrane segment at 547 to 567 (IIIASSAAVAVLATILMVYLY) threads the bilayer. Over 568 to 622 (KRKGNAEKYDKMDQPQDYGKSTSRNDEMLDPEASFWGEEKRASHTTPVLMEKPYY) the chain is Cytoplasmic. Residues 577 to 607 (DKMDQPQDYGKSTSRNDEMLDPEASFWGEEK) form a disordered region.

It belongs to the apicomplexan parasites AMA1 family.

The protein resides in the membrane. Functionally, involved in parasite invasion of erythrocytes. This Plasmodium falciparum (isolate Camp / Malaysia) protein is Apical membrane antigen 1 (AMA-1).